The primary structure comprises 1209 residues: DNA-directed RNA polymerase subunit beta' (1209 aa).

Positions 60, 62, 75, and 78 each coordinate Zn(2+). Mg(2+) contacts are provided by Asp-450, Asp-452, and Asp-454. Positions 819, 893, 900, and 903 each coordinate Zn(2+).

This sequence belongs to the RNA polymerase beta' chain family. In terms of assembly, the RNAP catalytic core consists of 2 alpha, 1 beta, 1 beta' and 1 omega subunit. When a sigma factor is associated with the core the holoenzyme is formed, which can initiate transcription. Mg(2+) serves as cofactor. It depends on Zn(2+) as a cofactor.

It carries out the reaction RNA(n) + a ribonucleoside 5'-triphosphate = RNA(n+1) + diphosphate. DNA-dependent RNA polymerase catalyzes the transcription of DNA into RNA using the four ribonucleoside triphosphates as substrates. The sequence is that of DNA-directed RNA polymerase subunit beta' from Streptococcus mutans serotype c (strain ATCC 700610 / UA159).